The primary structure comprises 104 residues: L-rhamnose mutarotase (104 aa).

Tyr-18 provides a ligand contact to substrate. The Proton donor role is filled by His-22. Residues Tyr-41 and 76–77 (WW) contribute to the substrate site.

This sequence belongs to the rhamnose mutarotase family. In terms of assembly, homodimer.

The protein resides in the cytoplasm. The enzyme catalyses alpha-L-rhamnose = beta-L-rhamnose. It participates in carbohydrate metabolism; L-rhamnose metabolism. Functionally, involved in the anomeric conversion of L-rhamnose. This is L-rhamnose mutarotase from Rhizobium meliloti (strain 1021) (Ensifer meliloti).